The following is a 453-amino-acid chain: Bifunctional protein GlmU (453 aa).

Residues 1–225 (MNIVILAAGT…EWETLGVNSK (225 aa)) are pyrophosphorylase. UDP-N-acetyl-alpha-D-glucosamine is bound by residues 6–9 (LAAG), Lys20, Gln71, 76–77 (GT), 98–100 (YGD), Gly135, Glu150, Asn165, and Asn223. Asp100 is a Mg(2+) binding site. Mg(2+) is bound at residue Asn223. A linker region spans residues 226 to 246 (AQLAELERIHQRTIADALLVD). The interval 247–453 (GVTLADPARV…GYVRPVKKKS (207 aa)) is N-acetyltransferase. 2 residues coordinate UDP-N-acetyl-alpha-D-glucosamine: Arg329 and Lys347. The Proton acceptor role is filled by His359. 2 residues coordinate UDP-N-acetyl-alpha-D-glucosamine: Tyr362 and Asn373. Acetyl-CoA-binding positions include Ala376, 382–383 (NY), Ser401, and Ala419.

The protein in the N-terminal section; belongs to the N-acetylglucosamine-1-phosphate uridyltransferase family. This sequence in the C-terminal section; belongs to the transferase hexapeptide repeat family. Homotrimer. Requires Mg(2+) as cofactor.

It localises to the cytoplasm. It catalyses the reaction alpha-D-glucosamine 1-phosphate + acetyl-CoA = N-acetyl-alpha-D-glucosamine 1-phosphate + CoA + H(+). The catalysed reaction is N-acetyl-alpha-D-glucosamine 1-phosphate + UTP + H(+) = UDP-N-acetyl-alpha-D-glucosamine + diphosphate. The protein operates within nucleotide-sugar biosynthesis; UDP-N-acetyl-alpha-D-glucosamine biosynthesis; N-acetyl-alpha-D-glucosamine 1-phosphate from alpha-D-glucosamine 6-phosphate (route II): step 2/2. Its pathway is nucleotide-sugar biosynthesis; UDP-N-acetyl-alpha-D-glucosamine biosynthesis; UDP-N-acetyl-alpha-D-glucosamine from N-acetyl-alpha-D-glucosamine 1-phosphate: step 1/1. It participates in bacterial outer membrane biogenesis; LPS lipid A biosynthesis. In terms of biological role, catalyzes the last two sequential reactions in the de novo biosynthetic pathway for UDP-N-acetylglucosamine (UDP-GlcNAc). The C-terminal domain catalyzes the transfer of acetyl group from acetyl coenzyme A to glucosamine-1-phosphate (GlcN-1-P) to produce N-acetylglucosamine-1-phosphate (GlcNAc-1-P), which is converted into UDP-GlcNAc by the transfer of uridine 5-monophosphate (from uridine 5-triphosphate), a reaction catalyzed by the N-terminal domain. This is Bifunctional protein GlmU from Burkholderia ambifaria (strain MC40-6).